Reading from the N-terminus, the 238-residue chain is ATP synthase subunit a (238 aa).

Helical transmembrane passes span 15–35 (IFNL…FVFI), 76–96 (YSLF…LGLM), 111–131 (PTAN…LTHI), 167–187 (LALR…LLLL), and 208–230 (AFSV…VYLG).

The protein belongs to the ATPase A chain family. In terms of assembly, F-type ATPases have 2 components, CF(1) - the catalytic core - and CF(0) - the membrane proton channel. CF(1) has five subunits: alpha(3), beta(3), gamma(1), delta(1), epsilon(1). CF(0) has three main subunits: a(1), b(2) and c(9-12). The alpha and beta chains form an alternating ring which encloses part of the gamma chain. CF(1) is attached to CF(0) by a central stalk formed by the gamma and epsilon chains, while a peripheral stalk is formed by the delta and b chains.

The protein resides in the cell membrane. In terms of biological role, key component of the proton channel; it plays a direct role in the translocation of protons across the membrane. The protein is ATP synthase subunit a of Streptococcus pneumoniae (strain ATCC BAA-255 / R6).